The sequence spans 690 residues: eEF1A lysine and N-terminal methyltransferase (690 aa).

Positions 427–451 are disordered; that stretch reads AAASSASKKKNKKKAKQPASTGAKD. The span at 433–442 shows a compositional bias: basic residues; sequence SKKKNKKKAK.

This sequence belongs to the methyltransferase superfamily.

The enzyme catalyses L-lysyl-[protein] + S-adenosyl-L-methionine = N(6)-methyl-L-lysyl-[protein] + S-adenosyl-L-homocysteine + H(+). The catalysed reaction is N(6)-methyl-L-lysyl-[protein] + S-adenosyl-L-methionine = N(6),N(6)-dimethyl-L-lysyl-[protein] + S-adenosyl-L-homocysteine + H(+). It catalyses the reaction N-terminal glycyl-L-lysyl-L-glutamyl-[protein] + 3 S-adenosyl-L-methionine = N-terminal N,N,N-trimethyl-glycyl-L-lysyl-L-glutamyl-[protein] + 3 S-adenosyl-L-homocysteine + 3 H(+). Its function is as follows. Dual methyltransferase that catalyzes methylation of elongation factor 1-alpha (eef1a1 and eef1a2) at two different positions, and is therefore involved in the regulation of mRNA translation. Via its C-terminus, methylates the N-terminus of eef1a1 and eef1a2. Via its N-terminus dimethylates lysine residues of eef1a1 and eef1a2. This is eEF1A lysine and N-terminal methyltransferase (mettl13) from Danio rerio (Zebrafish).